Here is a 302-residue protein sequence, read N- to C-terminus: Rab effector Noc2 (302 aa).

In terms of domain architecture, RabBD spans 41-158; that stretch reads QRRSQCLSPG…KRSGAWFYKG (118 aa). The FYVE-type zinc finger occupies 89–146; it reads GNGLSQCLLCGEVLGFLGSSSVFCKDCRKKVCTKCGIEASPGQKRPLWLCKICSEQRE. Zn(2+) contacts are provided by cysteine 95, cysteine 98, cysteine 112, cysteine 115, cysteine 120, cysteine 123, cysteine 138, and cysteine 141. The disordered stretch occupies residues 174–302; it reads DPHFRPLPVE…KRHTWATPRY (129 aa). Over residues 185 to 197 the composition is skewed to polar residues; the sequence is TETQPPSAETSRV. Serine 248 is subject to Phosphoserine. Low complexity predominate over residues 258 to 269; sequence SHLSGSQSSLGS.

As to quaternary structure, recruited to dense-core vesicles through specific interaction with RAB27A in endocrine cells. Interacts with RAB3A, RAB3B, RAB3C and RAB3D. Interacts with ZYX. As to expression, highly expressed in pancreatic islets. High to moderate expression in adrenal gland, pituitary gland and ovary.

It is found in the cytoplasm. It localises to the cytoplasmic vesicle. Its subcellular location is the secretory vesicle membrane. Functionally, rab GTPase effector involved in the late steps of regulated exocytosis, both in endocrine and exocrine cells. Regulates the exocytosis of dense-core vesicles in neuroendocrine cells through interaction with RAB27A. Acts as a potential RAB3B effector protein in epithelial cells. The protein is Rab effector Noc2 (Rph3al) of Mus musculus (Mouse).